A 116-amino-acid chain; its full sequence is Large ribosomal subunit protein P2 (116 aa).

The interval 60-116 (GKLSSMPSGGGVAAAAGGGGAAAGGGGAAPAAEEKKEEKKEESEEESDDDMGFGLFD) is disordered. The segment covering 67–87 (SGGGVAAAAGGGGAAAGGGGA) has biased composition (gly residues). Residues 91-101 (AEEKKEEKKEE) show a composition bias toward basic and acidic residues.

The protein belongs to the eukaryotic ribosomal protein P1/P2 family. As to quaternary structure, P1 and P2 exist as dimers at the large ribosomal subunit. Post-translationally, phosphorylated.

Functionally, plays an important role in the elongation step of protein synthesis. This Branchiostoma floridae (Florida lancelet) protein is Large ribosomal subunit protein P2.